The sequence spans 252 residues: 3-dehydroquinate dehydratase (252 aa).

3-dehydroquinate-binding positions include S21, 46–48, and R82; that span reads EWR. The active-site Proton donor/acceptor is H143. Catalysis depends on K170, which acts as the Schiff-base intermediate with substrate. Residues R213, S232, and Q236 each coordinate 3-dehydroquinate.

The protein belongs to the type-I 3-dehydroquinase family. As to quaternary structure, homodimer.

The catalysed reaction is 3-dehydroquinate = 3-dehydroshikimate + H2O. It participates in metabolic intermediate biosynthesis; chorismate biosynthesis; chorismate from D-erythrose 4-phosphate and phosphoenolpyruvate: step 3/7. Its activity is regulated as follows. Inhibited by (2R)-2-methyl-3-dehydroquinic acid. Functionally, involved in the third step of the chorismate pathway, which leads to the biosynthesis of aromatic amino acids. Catalyzes the cis-dehydration of 3-dehydroquinate (DHQ) and introduces the first double bond of the aromatic ring to yield 3-dehydroshikimate. The reaction involves the formation of an imine intermediate between the keto group of 3-dehydroquinate and the epsilon-amino group of a Lys-170 at the active site. In Salmonella typhimurium (strain LT2 / SGSC1412 / ATCC 700720), this protein is 3-dehydroquinate dehydratase.